Consider the following 348-residue polypeptide: Maintenance of mitochondrial morphology protein 1 (348 aa).

Residues 1 to 35 (MAGKADLGHTGISDNIVERQIFVPQPNNAWSFTQG) lie on the Lumenal side of the membrane. Residues 36-56 (LMCGQASVVVVLLVFIKFFVF) traverse the membrane as a helical segment. The Cytoplasmic segment spans residues 57 to 348 (SEAPPSSGAA…GKTEKVNGNE (292 aa)). An SMP-LTD domain is found at 114-323 (NPESLDWFNV…EPKFQVVRLP (210 aa)). A disordered region spans residues 328–348 (RSKNTREPVGAGKTEKVNGNE).

This sequence belongs to the MMM1 family. Homodimer. Component of the ER-mitochondria encounter structure (ERMES) or MDM complex, composed of MMM1, MDM10, MDM12 and MDM34. An MMM1 homodimer associates with one molecule of MDM12 on each side in a pairwise head-to-tail manner, and the SMP-LTD domains of MMM1 and MDM12 generate a continuous hydrophobic tunnel for phospholipid trafficking.

The protein resides in the endoplasmic reticulum membrane. Functionally, component of the ERMES/MDM complex, which serves as a molecular tether to connect the endoplasmic reticulum (ER) and mitochondria. Components of this complex are involved in the control of mitochondrial shape and protein biogenesis, and function in nonvesicular lipid trafficking between the ER and mitochondria. The MDM12-MMM1 subcomplex functions in the major beta-barrel assembly pathway that is responsible for biogenesis of all outer membrane beta-barrel proteins, and acts in a late step after the SAM complex. The MDM10-MDM12-MMM1 subcomplex further acts in the TOM40-specific pathway after the action of the MDM12-MMM1 complex. Essential for establishing and maintaining the structure of mitochondria and maintenance of mtDNA nucleoids. The sequence is that of Maintenance of mitochondrial morphology protein 1 from Clavispora lusitaniae (strain ATCC 42720) (Yeast).